A 589-amino-acid chain; its full sequence is ATP-dependent lipid A-core flippase (589 aa).

5 helical membrane-spanning segments follow: residues 29–49 (WLLV…STFL), 68–88 (ALWL…AGYI), 157–177 (VIGA…AILL), 254–274 (LSSA…LLIA), and 283–303 (LSPG…PALK). The region spanning 32–314 (VVAACGALLE…LTNVQNMLQS (283 aa)) is the ABC transmembrane type-1 domain. The ABC transporter domain occupies 346 to 582 (IEFRGITARY…DGLYAYLYSM (237 aa)). Residue 380–387 (GRSGSGKS) coordinates ATP.

The protein belongs to the ABC transporter superfamily. Lipid exporter (TC 3.A.1.106) family. As to quaternary structure, homodimer.

The protein resides in the cell inner membrane. The enzyme catalyses ATP + H2O + lipid A-core oligosaccharideSide 1 = ADP + phosphate + lipid A-core oligosaccharideSide 2.. Functionally, involved in lipopolysaccharide (LPS) biosynthesis. Translocates lipid A-core from the inner to the outer leaflet of the inner membrane. Transmembrane domains (TMD) form a pore in the inner membrane and the ATP-binding domain (NBD) is responsible for energy generation. The polypeptide is ATP-dependent lipid A-core flippase (Xylella fastidiosa (strain 9a5c)).